The sequence spans 508 residues: MLO-like protein 3 (508 aa).

Over 1–21 (MTDKEESNHSSEVGAVRSLQE) the chain is Extracellular. The chain crosses the membrane as a helical span at residues 22-42 (TPTWALATVCFFFIAVSICLE). At 43–68 (RLINLLSTRLKKNRKTSLLEAVEKLK) the chain is on the cytoplasmic side. The chain crosses the membrane as a helical span at residues 69–89 (SVLMVLGFMSLMLNVTEGEVS). Over 90–153 (KICIPIKYAN…SEEGLTQLSY (64 aa)) the chain is Extracellular. A helical transmembrane segment spans residues 154 to 174 (FFFVLACMHILCNLAILLLGM). Over 175–275 (AKMRKWNSWE…IQRSLHEDFK (101 aa)) the chain is Cytoplasmic. The helical transmembrane segment at 276-296 (TVVGISPLMWLTVVIFMLLDV) threads the bilayer. At 297–304 (SGWRVYFY) the chain is on the extracellular side. The chain crosses the membrane as a helical span at residues 305–325 (MSFVPLIIVLVIGTKLEMIVA). The Cytoplasmic segment spans residues 326–357 (KMAVTIKENNSVIRGTPLVESNDTHFWFSNPR). Residues 358–378 (FLLSILHYTLFLNTFEMAFIV) traverse the membrane as a helical segment. Residues 379-401 (WITWQFGINSCYHDNQGIIITRL) lie on the Extracellular side of the membrane. Residues 402-422 (VLAVTVQFLSSYITLPLYAIV) traverse the membrane as a helical segment. Residues 423–508 (TQMGSSYKRA…EIQIQEKTER (86 aa)) are Cytoplasmic-facing. Positions 436–457 (EQLANVLRHWQGMVRDKKKTIQ) are calmodulin-binding. The disordered stretch occupies residues 453–492 (KKTIQTPDTDNNSNNNNGDIDSGESPVQTEVASEFRFSGR). Residue Ser494 is modified to Phosphoserine.

It belongs to the MLO family.

Its subcellular location is the membrane. Its function is as follows. May be involved in modulation of pathogen defense and leaf cell death. Activity seems to be regulated by Ca(2+)-dependent calmodulin binding and seems not to require heterotrimeric G proteins. This Arabidopsis thaliana (Mouse-ear cress) protein is MLO-like protein 3 (MLO3).